The following is a 787-amino-acid chain: Protein translocase subunit SecA (787 aa).

ATP is bound by residues glutamine 85, 103-107 (GEGKT), and aspartate 492.

This sequence belongs to the SecA family. In terms of assembly, monomer and homodimer. Part of the essential Sec protein translocation apparatus which comprises SecA, SecYEG and auxiliary proteins SecDF. Other proteins may also be involved.

The protein localises to the cell membrane. It localises to the cytoplasm. The catalysed reaction is ATP + H2O + cellular proteinSide 1 = ADP + phosphate + cellular proteinSide 2.. Functionally, part of the Sec protein translocase complex. Interacts with the SecYEG preprotein conducting channel. Has a central role in coupling the hydrolysis of ATP to the transfer of proteins into and across the cell membrane, serving as an ATP-driven molecular motor driving the stepwise translocation of polypeptide chains across the membrane. This chain is Protein translocase subunit SecA, found in Lacticaseibacillus casei (strain BL23) (Lactobacillus casei).